The sequence spans 612 residues: MEVFGDLDKVDDAECVEVDPTRRYIRYNEVLGRGAMKTVYKAFDEVEGIEVAWSQVEIDEVMQSPDNLERLYSEVHLLKSLKHENVMKFYNYWVDDQKKTINVITELFTSGSLRQYRQKHPRVDLKAIKNWARQVLRGLDYLHTHQPPIIHRDLKCDNIFVNGNHGEVKIGDLGLATVMLTPRAKSVIGTPEFMAPELYDENYDELVDIYSFGMCMLEMFTLEYPYSECTNAAQIFKKVSKGVKPAALAKITNIQAKQFIDKCLVPASERLSAKELLQDPFLCSDNSSVLVGTKFPSSLPKSVDVSLEALHMDVDTNESMCTSTCKRNDLGGPHRSVLEFTRTNKNTELKLTGEKLDDNSVSLVLRIADLCGHARNIHFLFYLDSDTAMSVAAEMVEQLELADCDVTFIADFIDLLIVNLVPGQQLMNDAVMSTSSESKMGESEHVITSQQHPSELTHDYVLVEGMMHSKEANASPSDYIDSLLNATNLGGPNSSEGSDISVQLDGSSKSLSEYGVDEYRTLECGAYKGTDKLGCRHPLSNGSSNFAIFQMDQASHHSELVIGASVSITENRDVLNGELGLIEAQYEQWFRELTRMREEALEGARKKWLPDK.

The Protein kinase domain maps to 25–282; the sequence is IRYNEVLGRG…AKELLQDPFL (258 aa). ATP-binding positions include 105-108 and Lys-155; that span reads TELF. Asp-172 (proton acceptor) is an active-site residue.

This sequence belongs to the protein kinase superfamily. Ser/Thr protein kinase family. WNK subfamily.

It carries out the reaction L-seryl-[protein] + ATP = O-phospho-L-seryl-[protein] + ADP + H(+). The enzyme catalyses L-threonyl-[protein] + ATP = O-phospho-L-threonyl-[protein] + ADP + H(+). This Oryza sativa subsp. japonica (Rice) protein is Probable serine/threonine-protein kinase WNK4 (WNK4).